The following is a 257-amino-acid chain: K88 minor fimbrial subunit FaeJ (257 aa).

A signal peptide spans 1 to 26 (MLNIIHRLKSGMFPALFFLTSASVLA).

The protein resides in the fimbrium. Its function is as follows. K88 minor fimbrial subunit, plays an essential role in the biogenesis of the K88 fimbriae. Fimbriae (also called pili), are polar filaments radiating from the surface of the bacterium to a length of 0.5-1.5 micrometers and numbering 100-300 per cell. They enable bacteria to colonize the epithelium of specific host organs. The polypeptide is K88 minor fimbrial subunit FaeJ (faeJ) (Escherichia coli).